A 114-amino-acid polypeptide reads, in one-letter code: Large ribosomal subunit protein bL19 (114 aa).

It belongs to the bacterial ribosomal protein bL19 family.

Its function is as follows. This protein is located at the 30S-50S ribosomal subunit interface and may play a role in the structure and function of the aminoacyl-tRNA binding site. The polypeptide is Large ribosomal subunit protein bL19 (Bacillus mycoides (strain KBAB4) (Bacillus weihenstephanensis)).